Here is a 191-residue protein sequence, read N- to C-terminus: Recombination protein RecR (191 aa).

A C4-type zinc finger spans residues cysteine 51–cysteine 66. The region spanning glycine 74–proline 168 is the Toprim domain.

It belongs to the RecR family.

May play a role in DNA repair. It seems to be involved in an RecBC-independent recombinational process of DNA repair. It may act with RecF and RecO. The chain is Recombination protein RecR from Synechococcus sp. (strain CC9605).